The chain runs to 1093 residues: Semaphorin 5c (1093 aa).

A signal peptide spans 1-34 (MNMLILKLPKMFSQLWLLLILSLLTLEGPQPSTG). Residue Asn48 is glycosylated (N-linked (GlcNAc...) asparagine). Residues 50-495 (SRYISYQDLM…TDLALTRIPA (446 aa)) enclose the Sema domain. 2 disulfide bridges follow: Cys118–Cys128 and Cys146–Cys155. N-linked (GlcNAc...) asparagine glycosylation is found at Asn162, Asn182, Asn285, and Asn295. 2 cysteine pairs are disulfide-bonded: Cys271-Cys376 and Cys296-Cys338. Residue Asn341 is glycosylated (N-linked (GlcNAc...) asparagine). Residues 497 to 546 (HCSRHVSQSSCLNSMDPYCGWNELVERCMPQPQDSSVLQHWHQAPQITCP) enclose the PSI domain. TSP type-1 domains lie at 553 to 605 (DGGW…TNCT), 607 to 663 (HGGW…PPCP), and 671 to 726 (DGGW…QSCQ). N-linked (GlcNAc...) asparagine glycosylation occurs at Asn603. 6 cysteine pairs are disulfide-bonded: Cys619–Cys656, Cys623–Cys662, Cys634–Cys646, Cys683–Cys720, Cys687–Cys725, and Cys698–Cys710. Asn745 carries an N-linked (GlcNAc...) asparagine glycan. 3 TSP type-1 domains span residues 794-834 (DSAD…HACP), 850-901 (HGEW…VPCE), and 904-953 (LGWS…NECE). Cystine bridges form between Cys862/Cys895, Cys866/Cys900, and Cys877/Cys885. Residues 960-980 (TATLPIVIFVGLLFTVACCLA) form a helical membrane-spanning segment. N-linked (GlcNAc...) asparagine glycosylation is found at Asn998 and Asn1046. A disordered region spans residues 1018 to 1056 (PTKDYYDQRPKRQSSFRMPAKTSNLGNGNGTLNRNNMHQ). Positions 1041–1053 (NLGNGNGTLNRNN) are enriched in low complexity.

Belongs to the semaphorin family. In egg chambers, high levels of expression in the follicle cells, with little to no expression in the germ cells (at protein level). In stage 3 to 7 egg chambers, planar polarized at the basal epithelial surface (at protein level).

It is found in the apical cell membrane. The protein localises to the lateral cell membrane. The protein resides in the endosome. Regulates the motility of migrating epithelial cells by providing guidance cues within the migratory environment and may also play a role in development of the olfactory system. May act as a positive axonal guidance cue. Function in neurons is essential for adult survival and is important for climbing behavior. Promotes collective migration of follicular epithelial cells in egg chambers, likely by acting at the leading edge of the basal epithelium cells to provide guidance cues across the cell boundary to the trailing edge of the cell ahead. The transmembrane receptor PlexA on the trailing edge of the cell ahead, appears to transduce this signal to suppress the formation of protrusions. Involved in olfactory avoidance behavior. This chain is Semaphorin 5c, found in Drosophila melanogaster (Fruit fly).